Here is an 89-residue protein sequence, read N- to C-terminus: Large ribosomal subunit protein eL34 (89 aa).

It belongs to the eukaryotic ribosomal protein eL34 family.

The polypeptide is Large ribosomal subunit protein eL34 (Methanococcus maripaludis (strain C6 / ATCC BAA-1332)).